We begin with the raw amino-acid sequence, 769 residues long: Phenylalanine--tRNA ligase beta subunit (769 aa).

One can recognise a tRNA-binding domain in the interval 40–141 (GKLLTIARVA…GEPIPGCEPD (102 aa)). In terms of domain architecture, B5 spans 389 to 467 (PAPPPIELPL…RMIGYDSIAP (79 aa)). Mg(2+) contacts are provided by Asp445, Asp451, Glu454, and Glu455. The FDX-ACB domain occupies 676-768 (RRYPSSAFDL…GMRAKGYELR (93 aa)).

The protein belongs to the phenylalanyl-tRNA synthetase beta subunit family. Type 1 subfamily. In terms of assembly, tetramer of two alpha and two beta subunits. Mg(2+) serves as cofactor.

The protein localises to the cytoplasm. It catalyses the reaction tRNA(Phe) + L-phenylalanine + ATP = L-phenylalanyl-tRNA(Phe) + AMP + diphosphate + H(+). The sequence is that of Phenylalanine--tRNA ligase beta subunit from Solibacter usitatus (strain Ellin6076).